The chain runs to 133 residues: MGPLLGMVGAGAAGSAIGEGLGMLRDKWNRDFQERMSNTQYQRARKDMEAAGINPLAQFGSGQASSPSGGVSGSSFGSNITSMLGSSANMLMQLSKLKEDAERANFGSKTVQTINDARNNMVRSVITLSKRVK.

Belongs to the microviridae H protein family.

It localises to the virion. In terms of biological role, probably triggers with protein G the injection of the phage DNA into the host upon conformational changes induced by virus-host receptor interaction. This chain is Minor spike protein H, found in Spiroplasma virus 4 (SpV4).